Consider the following 104-residue polypeptide: Large ribosomal subunit protein bL21 (104 aa).

This sequence belongs to the bacterial ribosomal protein bL21 family. As to quaternary structure, part of the 50S ribosomal subunit. Contacts protein L20.

Functionally, this protein binds to 23S rRNA in the presence of protein L20. This chain is Large ribosomal subunit protein bL21, found in Agrobacterium fabrum (strain C58 / ATCC 33970) (Agrobacterium tumefaciens (strain C58)).